Here is a 280-residue protein sequence, read N- to C-terminus: Endochitinase A (280 aa).

Residues 1–25 (MANAPRILALGLLALLCAAAGPAAA) form the signal peptide. The Chitin-binding type-1 domain occupies 26-60 (QNCGCQPNFCCSKFGYCGTTDAYCGDGCQSGPCRS). Cystine bridges form between C28/C36, C30/C42, C35/C49, and C53/C58. The tract at residues 61–77 (GGGGGGGGGGGGGGSGG) is hinge region (poly-Gly). The tract at residues 78-280 (ANVANVVTDA…RVDPGPNLTC (203 aa)) is catalytic. C100 and C149 form a disulfide bridge. E144 (proton donor) is an active-site residue. N-linked (GlcNAc...) asparagine glycosylation occurs at N155. Disulfide bonds link C161–C170 and C248–C280. N-linked (GlcNAc...) asparagine glycosylation occurs at N277.

The protein belongs to the glycosyl hydrolase 19 family. Chitinase class IV subfamily.

It localises to the secreted. It catalyses the reaction Random endo-hydrolysis of N-acetyl-beta-D-glucosaminide (1-&gt;4)-beta-linkages in chitin and chitodextrins.. With respect to regulation, inactivated by l-ethyl-3-(3-dimethylaminopropyl)carbodiimide (EDC) in the absence of exogenous nucleophiles (e.g. GlcNAc4, GlcNAc3 and GlcNAc2). Not inhibited by tetra-N-acetylchitopentaose or modified chitotetraose substrate TMG-chitotriomycin-pMP, containing a free, non-acetylated glucosaminyl residue or a N-trimethylamino glucosamine (TMG) residue at the non-reducing terminus, respectively. Its function is as follows. Defense against chitin-containing fungal pathogens. Hydrolyzes glycol chitin and tetra-N-acetylchitotetraose in vitro. Its action is countered by fungal polyglycine hydrolases and fungalysin, that cleave the chitin-binding domain from the protein. This Zea mays (Maize) protein is Endochitinase A.